Here is a 425-residue protein sequence, read N- to C-terminus: Riboflavin biosynthesis protein RibBA (425 aa).

Residues 1-204 are DHBP synthase; the sequence is MTRLDSVERA…IADLIEWRRK (204 aa). D-ribulose 5-phosphate is bound by residues 28 to 29, Asp-33, 141 to 145, and Glu-165; these read RE and RPGHT. A Mg(2+)-binding site is contributed by Glu-29. Residue His-144 coordinates Mg(2+). Positions 205-425 are GTP cyclohydrolase II; that stretch reads HEKHIERVAE…HLPGEFGGAL (221 aa). 259–263 contributes to the GTP binding site; sequence RVHSE. Cys-264, Cys-275, and Cys-277 together coordinate Zn(2+). Residues Gln-280, 303 to 305, and Thr-325 contribute to the GTP site; that span reads EGR. The active-site Proton acceptor; for GTP cyclohydrolase activity is the Asp-337. Arg-339 serves as the catalytic Nucleophile; for GTP cyclohydrolase activity. GTP is bound by residues Thr-360 and Lys-365.

In the N-terminal section; belongs to the DHBP synthase family. It in the C-terminal section; belongs to the GTP cyclohydrolase II family. Mg(2+) serves as cofactor. Requires Mn(2+) as cofactor. It depends on Zn(2+) as a cofactor.

The catalysed reaction is D-ribulose 5-phosphate = (2S)-2-hydroxy-3-oxobutyl phosphate + formate + H(+). It catalyses the reaction GTP + 4 H2O = 2,5-diamino-6-hydroxy-4-(5-phosphoribosylamino)-pyrimidine + formate + 2 phosphate + 3 H(+). The protein operates within cofactor biosynthesis; riboflavin biosynthesis; 2-hydroxy-3-oxobutyl phosphate from D-ribulose 5-phosphate: step 1/1. It participates in cofactor biosynthesis; riboflavin biosynthesis; 5-amino-6-(D-ribitylamino)uracil from GTP: step 1/4. Functionally, catalyzes the conversion of D-ribulose 5-phosphate to formate and 3,4-dihydroxy-2-butanone 4-phosphate. Its function is as follows. Catalyzes the conversion of GTP to 2,5-diamino-6-ribosylamino-4(3H)-pyrimidinone 5'-phosphate (DARP), formate and pyrophosphate. The protein is Riboflavin biosynthesis protein RibBA of Mycobacterium bovis (strain ATCC BAA-935 / AF2122/97).